The chain runs to 184 residues: Large ribosomal subunit protein bL9 (184 aa).

Residues 160 to 184 (LQNQKSEQQEAEQDANKEATDGDDS) form a disordered region. A compositionally biased stretch (basic and acidic residues) spans 173 to 184 (DANKEATDGDDS).

It belongs to the bacterial ribosomal protein bL9 family.

Its function is as follows. Binds to the 23S rRNA. This chain is Large ribosomal subunit protein bL9, found in Wolbachia pipientis wMel.